The chain runs to 1102 residues: Carbamoyl phosphate synthase large chain (1102 aa).

Residues 1-408 are carboxyphosphate synthetic domain; it reads MPKRSDIQSV…ALQKALRSLE (408 aa). Residues R129, R175, G181, G182, E214, I216, E221, G247, V248, H249, Q291, and E305 each coordinate ATP. An ATP-grasp 1 domain is found at 137-334; sequence EAVKEKIGYG…IAKIAAKLAV (198 aa). Residues Q291, E305, and N307 each contribute to the Mg(2+) site. 3 residues coordinate Mn(2+): Q291, E305, and N307. Residues 409–551 are oligomerization domain; that stretch reads KKGSQFAFTG…YFYSSYDEES (143 aa). The interval 552-954 is carbamoyl phosphate synthetic domain; that stretch reads EVAPRTKPAV…AYAKSQAGAY (403 aa). Positions 682-873 constitute an ATP-grasp 2 domain; sequence GRVLAEAGLP…LAKAAARISL (192 aa). ATP is bound by residues R718, R757, L759, E764, G789, I790, H791, S792, Q832, and E844. Residues Q832, E844, and N846 each coordinate Mg(2+). Positions 832, 844, and 846 each coordinate Mn(2+). One can recognise an MGS-like domain in the interval 955-1100; sequence GPLPTAGRAF…QEHAEHLTAA (146 aa). The tract at residues 955 to 1102 is allosteric domain; it reads GPLPTAGRAF…HAEHLTAARD (148 aa).

The protein belongs to the CarB family. In terms of assembly, composed of two chains; the small (or glutamine) chain promotes the hydrolysis of glutamine to ammonia, which is used by the large (or ammonia) chain to synthesize carbamoyl phosphate. Tetramer of heterodimers (alpha,beta)4. Mg(2+) serves as cofactor. The cofactor is Mn(2+).

It catalyses the reaction hydrogencarbonate + L-glutamine + 2 ATP + H2O = carbamoyl phosphate + L-glutamate + 2 ADP + phosphate + 2 H(+). The catalysed reaction is hydrogencarbonate + NH4(+) + 2 ATP = carbamoyl phosphate + 2 ADP + phosphate + 2 H(+). It functions in the pathway amino-acid biosynthesis; L-arginine biosynthesis; carbamoyl phosphate from bicarbonate: step 1/1. Its pathway is pyrimidine metabolism; UMP biosynthesis via de novo pathway; (S)-dihydroorotate from bicarbonate: step 1/3. Its function is as follows. Large subunit of the glutamine-dependent carbamoyl phosphate synthetase (CPSase). CPSase catalyzes the formation of carbamoyl phosphate from the ammonia moiety of glutamine, carbonate, and phosphate donated by ATP, constituting the first step of 2 biosynthetic pathways, one leading to arginine and/or urea and the other to pyrimidine nucleotides. The large subunit (synthetase) binds the substrates ammonia (free or transferred from glutamine from the small subunit), hydrogencarbonate and ATP and carries out an ATP-coupled ligase reaction, activating hydrogencarbonate by forming carboxy phosphate which reacts with ammonia to form carbamoyl phosphate. This Streptomyces griseus subsp. griseus (strain JCM 4626 / CBS 651.72 / NBRC 13350 / KCC S-0626 / ISP 5235) protein is Carbamoyl phosphate synthase large chain.